The sequence spans 387 residues: 3-ketoacyl-CoA thiolase (387 aa).

The active-site Acyl-thioester intermediate is the Cys91. Active-site proton acceptor residues include His343 and Cys373.

Belongs to the thiolase-like superfamily. Thiolase family. Heterotetramer of two alpha chains (FadB) and two beta chains (FadA).

The protein localises to the cytoplasm. The enzyme catalyses an acyl-CoA + acetyl-CoA = a 3-oxoacyl-CoA + CoA. Its pathway is lipid metabolism; fatty acid beta-oxidation. Catalyzes the final step of fatty acid oxidation in which acetyl-CoA is released and the CoA ester of a fatty acid two carbons shorter is formed. In Shewanella sp. (strain MR-4), this protein is 3-ketoacyl-CoA thiolase.